The primary structure comprises 273 residues: Putative cysteine-rich repeat secretory protein 40 (273 aa).

Positions 1–32 are cleaved as a signal peptide; that stretch reads MYPSCSLLQRLVWFPFLALVATQLLFIRNVSS. 2 consecutive Gnk2-homologous domains span residues 39–141 and 151–264; these read YLHH…SISV and YENN…LYPF.

It belongs to the cysteine-rich repeat secretory protein family.

Its subcellular location is the secreted. The sequence is that of Putative cysteine-rich repeat secretory protein 40 (CRRSP40) from Arabidopsis thaliana (Mouse-ear cress).